Consider the following 60-residue polypeptide: Large ribosomal subunit protein uL30 (60 aa).

Belongs to the universal ribosomal protein uL30 family. As to quaternary structure, part of the 50S ribosomal subunit.

The sequence is that of Large ribosomal subunit protein uL30 from Desulfotalea psychrophila (strain LSv54 / DSM 12343).